We begin with the raw amino-acid sequence, 266 residues long: tRNA pseudouridine synthase A (266 aa).

Aspartate 57 serves as the catalytic Nucleophile. Tyrosine 115 is a binding site for substrate.

It belongs to the tRNA pseudouridine synthase TruA family. Homodimer.

The catalysed reaction is uridine(38/39/40) in tRNA = pseudouridine(38/39/40) in tRNA. In terms of biological role, formation of pseudouridine at positions 38, 39 and 40 in the anticodon stem and loop of transfer RNAs. The chain is tRNA pseudouridine synthase A from Buchnera aphidicola subsp. Acyrthosiphon pisum (strain APS) (Acyrthosiphon pisum symbiotic bacterium).